The following is a 1479-amino-acid chain: Chromosome partition protein MukB (1479 aa).

An ATP-binding site is contributed by 34 to 41 (GGNGAGKS). Coiled-coil stretches lie at residues 138 to 163 (ETLN…MEGV) and 331 to 664 (QAAS…RLSQ). The flexible hinge stretch occupies residues 665–782 (PGGSEDPRLN…ALPLFGRAAR (118 aa)). Coiled coils occupy residues 831 to 1112 (DDPE…TAKA) and 1206 to 1257 (VEAI…MLNQ).

Belongs to the SMC family. MukB subfamily. As to quaternary structure, homodimerization via its hinge domain. Binds to DNA via its C-terminal region. Interacts, and probably forms a ternary complex, with MukE and MukF via its C-terminal region. The complex formation is stimulated by calcium or magnesium. Interacts with tubulin-related protein FtsZ.

It is found in the cytoplasm. It localises to the nucleoid. Plays a central role in chromosome condensation, segregation and cell cycle progression. Functions as a homodimer, which is essential for chromosome partition. Involved in negative DNA supercoiling in vivo, and by this means organize and compact chromosomes. May achieve or facilitate chromosome segregation by condensation DNA from both sides of a centrally located replisome during cell division. The protein is Chromosome partition protein MukB of Klebsiella pneumoniae.